Reading from the N-terminus, the 668-residue chain is UvrABC system protein B (668 aa).

The 389-residue stretch at 25–413 folds into the Helicase ATP-binding domain; that stretch reads NGINTGLQHQ…QNTVQQVIRP (389 aa). 38-45 contacts ATP; the sequence is GVTGSGKT. The Beta-hairpin signature appears at 91 to 114; it reads YYDYYQPEAYIAASDTYIEKDSSV. Residues 429–595 form the Helicase C-terminal domain; that stretch reads QVEDALSEIN…TIIKNIDDML (167 aa). Positions 629-664 constitute a UVR domain; it reads TKVIKALEKRMRAYAKELEFEKATTIRDKITEVKQK.

This sequence belongs to the UvrB family. Forms a heterotetramer with UvrA during the search for lesions. Interacts with UvrC in an incision complex.

The protein localises to the cytoplasm. The UvrABC repair system catalyzes the recognition and processing of DNA lesions. A damage recognition complex composed of 2 UvrA and 2 UvrB subunits scans DNA for abnormalities. Upon binding of the UvrA(2)B(2) complex to a putative damaged site, the DNA wraps around one UvrB monomer. DNA wrap is dependent on ATP binding by UvrB and probably causes local melting of the DNA helix, facilitating insertion of UvrB beta-hairpin between the DNA strands. Then UvrB probes one DNA strand for the presence of a lesion. If a lesion is found the UvrA subunits dissociate and the UvrB-DNA preincision complex is formed. This complex is subsequently bound by UvrC and the second UvrB is released. If no lesion is found, the DNA wraps around the other UvrB subunit that will check the other stand for damage. In Francisella tularensis subsp. tularensis (strain SCHU S4 / Schu 4), this protein is UvrABC system protein B.